Here is a 67-residue protein sequence, read N- to C-terminus: Large ribosomal subunit protein bL35 (67 aa).

It belongs to the bacterial ribosomal protein bL35 family.

The sequence is that of Large ribosomal subunit protein bL35 from Agrobacterium fabrum (strain C58 / ATCC 33970) (Agrobacterium tumefaciens (strain C58)).